The chain runs to 295 residues: Small ribosomal subunit protein uS2 (295 aa).

Position 2 is an N-acetylserine (Ser2). Phosphoserine is present on Ser43. Lys52 carries the N6-acetyllysine modification. Residues Thr54–Gln113 form an interaction with PPP1R16B region. Lys89 is modified (N6-acetyllysine; alternate). Residue Lys89 forms a Glycyl lysine isopeptide (Lys-Gly) (interchain with G-Cter in SUMO2); alternate linkage. Phosphothreonine is present on Thr97. Laminin-binding stretches follow at residues Ile161 to Arg180 and Arg205 to Gly229. [DE]-W-[ST] repeat units lie at residues Glu230–Thr232, Asp247–Ser249, Asp266–Ser268, Asp275–Ser277, and Glu293–Ser295. Residues Gln242–Ser295 form a laminin-binding region. The segment at Asp266–Ser295 is disordered.

The protein belongs to the universal ribosomal protein uS2 family. Monomer (37LRP) and homodimer (67LR). Component of the small ribosomal subunit. Mature ribosomes consist of a small (40S) and a large (60S) subunit. The 40S subunit contains about 33 different proteins and 1 molecule of RNA (18S). The 60S subunit contains about 49 different proteins and 3 molecules of RNA (28S, 5.8S and 5S). Interacts with RPS21. Interacts with several laminins including at least LAMB1. Interacts with MDK. The mature dimeric form interacts with PPP1R16B (via its fourth ankyrin repeat). Interacts with PPP1CA only in the presence of PPP1R16B. Post-translationally, acylated. Acylation may be a prerequisite for conversion of the monomeric 37 kDa laminin receptor precursor (37LRP) to the mature dimeric 67 kDa laminin receptor (67LR), and may provide a mechanism for membrane association. In terms of processing, cleaved by stromelysin-3 (ST3) at the cell surface. Cleavage by stromelysin-3 may be a mechanism to alter cell-extracellular matrix interactions.

It localises to the cell membrane. The protein localises to the cytoplasm. It is found in the nucleus. Functionally, required for the assembly and/or stability of the 40S ribosomal subunit. Required for the processing of the 20S rRNA-precursor to mature 18S rRNA in a late step of the maturation of 40S ribosomal subunits. Also functions as a cell surface receptor for laminin. Plays a role in cell adhesion to the basement membrane and in the consequent activation of signaling transduction pathways. May play a role in cell fate determination and tissue morphogenesis. Also acts as a receptor for several other ligands, including the pathogenic prion protein, viruses, and bacteria. Acts as a PPP1R16B-dependent substrate of PPP1CA. This Chlorocebus aethiops (Green monkey) protein is Small ribosomal subunit protein uS2.